The primary structure comprises 125 residues: Small ribosomal subunit protein uS12 (125 aa).

A 3-methylthioaspartic acid modification is found at aspartate 89. Positions 101-125 (SLDTAGVKDRKQSRSKYGAKRPKKA) are disordered. The span at 113–125 (SRSKYGAKRPKKA) shows a compositional bias: basic residues.

The protein belongs to the universal ribosomal protein uS12 family. In terms of assembly, part of the 30S ribosomal subunit. Contacts proteins S8 and S17. May interact with IF1 in the 30S initiation complex.

Functionally, with S4 and S5 plays an important role in translational accuracy. In terms of biological role, interacts with and stabilizes bases of the 16S rRNA that are involved in tRNA selection in the A site and with the mRNA backbone. Located at the interface of the 30S and 50S subunits, it traverses the body of the 30S subunit contacting proteins on the other side and probably holding the rRNA structure together. The combined cluster of proteins S8, S12 and S17 appears to hold together the shoulder and platform of the 30S subunit. This is Small ribosomal subunit protein uS12 from Thiobacillus denitrificans (strain ATCC 25259 / T1).